We begin with the raw amino-acid sequence, 225 residues long: Glutathione S-transferase A (225 aa).

The GST N-terminal domain occupies 3-85; that stretch reads KDMTLLWGSG…YLESQFKSQG (83 aa). Residue R18 coordinates glutathione. A GST C-terminal domain is found at 92–217; the sequence is CPAEQAMMYQ…WPPTWLESPQ (126 aa).

The protein belongs to the GST superfamily. Theta family. Homodimer. Found in all the tissues examined. Highest values found in liver and in intestinal mucosa.

The protein resides in the cytoplasm. It catalyses the reaction RX + glutathione = an S-substituted glutathione + a halide anion + H(+). Its function is as follows. Conjugation of reduced glutathione to a wide number of exogenous and endogenous hydrophobic electrophiles. The polypeptide is Glutathione S-transferase A (Pleuronectes platessa (European plaice)).